The chain runs to 413 residues: MKIYLVGGAVRDALLGLPVKDKDWVVVGATPQEMLDAGYQQVGRDFPVFLHPQTHEEYALARTERKSGSGYTGFTCYAAPDVTLEADLQRRDLTINALARDDDGQIIDPYHGRRDLEARLLRHVSPAFGEDPLRVLRVARFAARYAHLSFRIADETLTLMREMTAAGELEHLTPERVWKETENALTTRNPQVYFQVLRDCGALRVLFPEIDALFGVPAPAKWHPEIDTGVHTLMTLSMAAMLSPQLDVRFATLCHDVGKGLTPKNLWPRHHGHGPVGVKLVEQLCQRLRVPNDLRDLAKLVAAYHDLIHTFPILQPKTIVKLFDAIDAWRKPQRVEQIALTSEADVRGRTGFEASDYPQGRWLREAWQVAQAVPTKEVVEAGFKGIEIREELTKRRIAAVANWKEKRCPNPAS.

2 residues coordinate ATP: glycine 8 and arginine 11. Residues glycine 8 and arginine 11 each contribute to the CTP site. Mg(2+) is bound by residues aspartate 21 and aspartate 23. ATP contacts are provided by arginine 91, arginine 137, and arginine 140. CTP-binding residues include arginine 91, arginine 137, and arginine 140. Positions 228-329 constitute an HD domain; sequence TGVHTLMTLS…VKLFDAIDAW (102 aa).

This sequence belongs to the tRNA nucleotidyltransferase/poly(A) polymerase family. Bacterial CCA-adding enzyme type 1 subfamily. In terms of assembly, monomer. Can also form homodimers and oligomers. It depends on Mg(2+) as a cofactor. The cofactor is Ni(2+).

The catalysed reaction is a tRNA precursor + 2 CTP + ATP = a tRNA with a 3' CCA end + 3 diphosphate. The enzyme catalyses a tRNA with a 3' CCA end + 2 CTP + ATP = a tRNA with a 3' CCACCA end + 3 diphosphate. Its function is as follows. Catalyzes the addition and repair of the essential 3'-terminal CCA sequence in tRNAs without using a nucleic acid template. Adds these three nucleotides in the order of C, C, and A to the tRNA nucleotide-73, using CTP and ATP as substrates and producing inorganic pyrophosphate. tRNA 3'-terminal CCA addition is required both for tRNA processing and repair. Also involved in tRNA surveillance by mediating tandem CCA addition to generate a CCACCA at the 3' terminus of unstable tRNAs. While stable tRNAs receive only 3'-terminal CCA, unstable tRNAs are marked with CCACCA and rapidly degraded. In Salmonella typhi, this protein is Multifunctional CCA protein.